We begin with the raw amino-acid sequence, 794 residues long: Striatin-3 (794 aa).

Position 1 is an N-acetylmethionine (M1). A compositionally biased stretch (gly residues) spans 1–12 (MDELAGGGGGQG). The interval 1-59 (MDELAGGGGGQGMAVPPRPQQGPGGNLSLPPGANGAPGGGGPPAAETAGPPAGPELSRP) is disordered. The interval 70 to 78 (YIQHEWARF) is caveolin-binding. Residues 76 to 135 (ARFEMERAHWEVERAELQARIAFLQGERKGQENLKKDLVRRIKMLEYALKQERAKYHKLK) are a coiled coil. The residue at position 149 (T149) is a Phosphothreonine. The tract at residues 164-181 (QNSQLTWKQGRQLLRQYL) is calmodulin-binding. S200, S212, S227, S255, and S332 each carry phosphoserine. The disordered stretch occupies residues 309–339 (EDGEGAGEARSSGDGTEWDKDDLSPTAEVWD). 6 WD repeats span residues 475-514 (SHFD…PAKK), 528-567 (AHIG…VDPY), 581-620 (AHTD…PCIC), 676-715 (QSSN…MIHS), 718-757 (AHLD…CVQE), and 764-794 (KLDE…KVFV).

It belongs to the WD repeat striatin family. As to quaternary structure, tetramerizes. Part of the core of STRIPAK complexes composed of PP2A catalytic and scaffolding subunits, the striatins (PP2A regulatory subunits), the striatin-associated proteins MOB4, STRIP1 and STRIP2, PDCD10 and members of the STE20 kinases, such as STK24 and STK26. The STRIPAK complex can be extended by adapter proteins such as SLMAP:SIKE1 or CTTNBP2NL. Interacts with CDC42BPB.

It localises to the cytoplasm. The protein resides in the membrane. Functionally, calmodulin-binding scaffolding protein which is the center of the striatin-interacting phosphatase and kinase (STRIPAK) complexes. STRIPAK complexes have critical roles in protein (de)phosphorylation and are regulators of multiple signaling pathways including Hippo, MAPK, nuclear receptor and cytoskeleton remodeling. Different types of STRIPAK complexes are involved in a variety of biological processes such as cell growth, differentiation, apoptosis, metabolism and immune regulation. The polypeptide is Striatin-3 (Strn3) (Rattus norvegicus (Rat)).